The following is a 275-amino-acid chain: MEERKEEGEAEIQEHGPEHWFSKWERQCLAEAEQDEQLPPELQEEAAAAAQPEHKQQKLWHLFQNSATAVAQLYKDRVCQQPGLSLWVPFQNAATAVTNLYKESVDTHQRSFDIGIQIGYQRRNKDVLAWVKKRRRTIRREDLISFLCGKVPPPRNSRAPPRLTVVSPNRATSTETSSSVETDLQPFREAIALHGLSGAMASISVRSSTPGSPTHVSSGSNASRRRNGLHDVDLNTFISEEMALHLDNGGTRKRTSAQCGDVITDSPTHKRNRMI.

Residues 32–44 show a composition bias toward acidic residues; sequence AEQDEQLPPELQE. The disordered stretch occupies residues 32 to 51; that stretch reads AEQDEQLPPELQEEAAAAAQ. Residues 80–152 are HUWE1-binding and HAPSTR1 oligomerization (HBO) domain; it reads QQPGLSLWVP…LISFLCGKVP (73 aa). Disordered stretches follow at residues 155–181, 204–227, and 250–275; these read RNSR…SSVE, SVRS…RRRN, and GTRK…NRMI. Ser167 carries the post-translational modification Phosphoserine. Low complexity predominate over residues 172-181; that stretch reads TSTETSSSVE. The span at 204 to 216 shows a compositional bias: polar residues; it reads SVRSSTPGSPTHV. A Phosphoserine modification is found at Ser212.

Belongs to the HAPSTR1 family. As to quaternary structure, homooligomer. Heterooligomer with HAPSTR2; the interaction is direct and stabilizes HAPSTR1. Interacts with HUWE1. Ubiquitinated by HUWE1. Promotes HAPSTR1 degradation through polyubiquitination.

It localises to the nucleus. The protein resides in the cytoplasm. Acts as a central player within a network of stress response pathways promoting cellular adaptability. The E3 ligase HUWE1 assists HAPSTR1 in controlling stress signaling and in turn, HUWE1 feeds back to promote the degradation of HAPSTR1. HAPSTR1 represents a central coordination mechanism for stress response programs. Functions as a negative regulator of TP53/P53 in the cellular response to telomere erosion and probably also DNA damage. May attenuate p53/TP53 activation through the E3 ubiquitin ligase HUWE1. This chain is HUWE1-associated protein modifying stress responses 1, found in Homo sapiens (Human).